A 726-amino-acid chain; its full sequence is Long-chain-alcohol oxidase FAO4A (726 aa).

The chain crosses the membrane as a helical span at residues 103-119; that stretch reads ILLNWSSSYFSLLRMLF. 224–239 contacts FAD; sequence CDAVVVGSGSGGGVAA. Histidine 659 acts as the Proton acceptor in catalysis.

Belongs to the GMC oxidoreductase family.

The protein localises to the membrane. The catalysed reaction is a long-chain primary fatty alcohol + O2 = a long-chain fatty aldehyde + H2O2. In terms of biological role, long-chain fatty alcohol oxidase involved in the omega-oxidation pathway of lipid degradation. The protein is Long-chain-alcohol oxidase FAO4A (FAO4A) of Arabidopsis thaliana (Mouse-ear cress).